Reading from the N-terminus, the 80-residue chain is Cell division activator CedA (80 aa).

It belongs to the CedA family.

Its function is as follows. Activates the cell division inhibited by chromosomal DNA over-replication. The polypeptide is Cell division activator CedA (Escherichia coli O1:K1 / APEC).